The sequence spans 280 residues: Vacuolar protein sorting-associated protein 71 (280 aa).

The span at 64 to 73 (RSEGDGNSIS) shows a compositional bias: polar residues. Positions 64–92 (RSEGDGNSISRQDDRNSKNSHSFEERYTQ) are disordered. Basic and acidic residues predominate over residues 74-92 (RQDDRNSKNSHSFEERYTQ). Residues Cys244, Cys247, Cys256, Cys259, Cys264, Cys268, His272, and Cys277 each coordinate Zn(2+). An HIT-type zinc finger spans residues 244–277 (CSICGGYDSISSCVNCGNKICSVSCFKLHNETRC).

In terms of assembly, belongs to the SWR1 complex at least composed of ACT1, ARP4, RVB1, RVB2, ARP6, YAF9, VPS71, VPS72, SWC3, SWC4, SWC5, SWR1 and HTZ1.

The protein localises to the nucleus. In terms of biological role, participates in the catalytic exchange of histone H2A for the H2A variant HZT1, an euchromatin-specific factor, leading to chromatin remodeling and changes in transcription of targeted genes. Indirectly involved in vacuolar protein sorting. This chain is Vacuolar protein sorting-associated protein 71 (VPS71), found in Saccharomyces cerevisiae (strain ATCC 204508 / S288c) (Baker's yeast).